The sequence spans 133 residues: uncharacterized protein (133 aa).

This is an uncharacterized protein from Escherichia coli O157:H7.